The following is a 733-amino-acid chain: Zinc finger transcription factor ace1 (733 aa).

A compositionally biased stretch (basic residues) spans 1–11; the sequence is MSFSNPRRRTP. Disordered regions lie at residues 1–22, 34–63, and 89–183; these read MSFSNPRRRTPVTRPGTDCEHG, GATFHSPTSPSASSAAGDFVPPTLTRSQSA, and ASLS…SSTT. Positions 39–49 are enriched in low complexity; sequence SPTSPSASSAA. Over residues 132–142 the composition is skewed to basic residues; that stretch reads LRPRSVRRTRN. Polar residues predominate over residues 148–158; it reads GIGSSVVSTND. Positions 171–183 are enriched in low complexity; the sequence is ASALTRSAASSTT. 3 consecutive C2H2-type zinc fingers follow at residues 400–424, 428–456, and 463–488; these read KKCREPGCTKEFKRPCDLTKHEKTH, WKCPIPTCKYHEYGWPTEKEMDRHINDKH, and YECLFKPCPYKSKRESNCKQHMEKAH. Positions 497-533 are disordered; it reads TNGKKAPSQNGSTAQQTPPLANVSTPSSTPSYSVPTP. The segment covering 503–515 has biased composition (polar residues); sequence PSQNGSTAQQTPP. Low complexity predominate over residues 519 to 530; the sequence is VSTPSSTPSYSV.

Its subcellular location is the nucleus. In terms of biological role, binds to the promoter of the cbh1 gene and activates transcription. The polypeptide is Zinc finger transcription factor ace1 (ace1) (Hypocrea jecorina (Trichoderma reesei)).